The following is a 132-amino-acid chain: D-ribose pyranase (132 aa).

The active-site Proton donor is histidine 20. Residues aspartate 28, histidine 99, and 121-123 (YSN) contribute to the substrate site.

The protein belongs to the RbsD / FucU family. RbsD subfamily. As to quaternary structure, homodecamer.

The protein resides in the cytoplasm. The enzyme catalyses beta-D-ribopyranose = beta-D-ribofuranose. It participates in carbohydrate metabolism; D-ribose degradation; D-ribose 5-phosphate from beta-D-ribopyranose: step 1/2. Its function is as follows. Catalyzes the interconversion of beta-pyran and beta-furan forms of D-ribose. The protein is D-ribose pyranase of Pseudomonas putida (strain GB-1).